A 312-amino-acid polypeptide reads, in one-letter code: Translation initiation factor IF3-2, chloroplastic (312 aa).

The transit peptide at 1–55 directs the protein to the chloroplast; the sequence is MAGITSSTVGFNAVFTGITKTVSSHSLFSVDSKLCSLRLSKTELSFTNLTPSPRR. Residues 253–263 show a composition bias toward basic and acidic residues; that stretch reads EMIRKPQEPPT. Residues 253 to 312 form a disordered region; it reads EMIRKPQEPPTRKKKKTAENEASASAAEITAEPEPEPEPEPEPEPEPEPEPEPEPLQIDS. Low complexity predominate over residues 272–282; that stretch reads NEASASAAEIT. Over residues 283 to 305 the composition is skewed to acidic residues; the sequence is AEPEPEPEPEPEPEPEPEPEPEP.

The protein belongs to the IF-3 family. Monomer. In terms of tissue distribution, highly expressed in young, newly emerged leaves.

It is found in the plastid. The protein resides in the chloroplast. Functionally, chloroplast translation initiation factor that is essential for the coordination of leaf and chloroplast development. IF-3 binds to the 30S ribosomal subunit and shifts the equilibrium between 70S ribosomes and their 50S and 30S subunits in favor of the free subunits, thus enhancing the availability of 30S subunits on which protein synthesis initiation begins. The chain is Translation initiation factor IF3-2, chloroplastic from Arabidopsis thaliana (Mouse-ear cress).